We begin with the raw amino-acid sequence, 180 residues long: Crossover junction endodeoxyribonuclease RuvC (180 aa).

Residues D7, E66, and D138 contribute to the active site. The Mg(2+) site is built by D7, E66, and D138.

The protein belongs to the RuvC family. In terms of assembly, homodimer which binds Holliday junction (HJ) DNA. The HJ becomes 2-fold symmetrical on binding to RuvC with unstacked arms; it has a different conformation from HJ DNA in complex with RuvA. In the full resolvosome a probable DNA-RuvA(4)-RuvB(12)-RuvC(2) complex forms which resolves the HJ. Requires Mg(2+) as cofactor.

It is found in the cytoplasm. It catalyses the reaction Endonucleolytic cleavage at a junction such as a reciprocal single-stranded crossover between two homologous DNA duplexes (Holliday junction).. Functionally, the RuvA-RuvB-RuvC complex processes Holliday junction (HJ) DNA during genetic recombination and DNA repair. Endonuclease that resolves HJ intermediates. Cleaves cruciform DNA by making single-stranded nicks across the HJ at symmetrical positions within the homologous arms, yielding a 5'-phosphate and a 3'-hydroxyl group; requires a central core of homology in the junction. The consensus cleavage sequence is 5'-(A/T)TT(C/G)-3'. Cleavage occurs on the 3'-side of the TT dinucleotide at the point of strand exchange. HJ branch migration catalyzed by RuvA-RuvB allows RuvC to scan DNA until it finds its consensus sequence, where it cleaves and resolves the cruciform DNA. The polypeptide is Crossover junction endodeoxyribonuclease RuvC (Janthinobacterium sp. (strain Marseille) (Minibacterium massiliensis)).